The following is a 120-amino-acid chain: C-C motif chemokine 23 (120 aa).

The signal sequence occupies residues 1–21 (MKVSVAALSCLMLVTALGSQA). Disulfide bonds link C54–C78, C55–C94, and C65–C105.

The protein belongs to the intercrine beta (chemokine CC) family. Post-translationally, the N-terminal is proteolytically cleaved by proteases associated with inflammatory responses. The processed forms, CCL23(19-99), CCL23(22-99), CCL23(27-99) and CCL23(30-99) exhibit increase in CCR1-mediated signaling and chemotaxis assays in vitro. As to expression, high levels in adult lung, liver, skeletal muscle and pancreas. Moderate levels in fetal liver, adult bone marrow and placenta. The short form is the major species and the longer form was detected only in very low abundance. CCL23(19-99), CCL23(22-99), CCL23(27-99), CCL23(30-99) are found in high levels in synovial fluids from rheumatoid patients.

The protein localises to the secreted. Functionally, shows chemotactic activity for monocytes, resting T-lymphocytes, and neutrophils, but not for activated lymphocytes. Inhibits proliferation of myeloid progenitor cells in colony formation assays. This protein can bind heparin. Binds CCR1. CCL23(19-99), CCL23(22-99), CCL23(27-99), CCL23(30-99) are more potent chemoattractants than CCL23. This chain is C-C motif chemokine 23 (CCL23), found in Homo sapiens (Human).